We begin with the raw amino-acid sequence, 393 residues long: Putative amino-acid ABC transporter permease protein YhdX (393 aa).

8 helical membrane-spanning segments follow: residues 21-41, 92-112, 128-148, 180-200, 219-239, 256-276, 333-353, and 363-383; these read AWLF…WLFH, LLVS…IGLA, IEIF…FAVL, DGFI…VGLF, IAAV…GAAL, VLIP…SAFI, SSLA…GTVL, and IAMT…LMNI. Positions 88–381 constitute an ABC transmembrane type-1 domain; it reads LLNTLLVSAL…IISLTISLLM (294 aa).

Belongs to the binding-protein-dependent transport system permease family. HisMQ subfamily.

It is found in the cell inner membrane. Its function is as follows. Probably part of the binding-protein-dependent transport system YdhWXYZ for an amino acid; probably responsible for the translocation of the substrate across the membrane. This chain is Putative amino-acid ABC transporter permease protein YhdX (yhdX), found in Escherichia coli (strain K12).